The sequence spans 256 residues: Mannose-specific lectin 1 (256 aa).

The signal sequence occupies residues 1 to 23; the sequence is MAKLLLFLLPAILGLLVPRSAVA. 2 Bulb-type lectin domains span residues 26–131 and 145–252; these read TNYL…PWVR and NNLL…SKRS. Residues 51 to 55, Tyr-59, Trp-63, Gln-64, 170 to 174, Tyr-178, and 182 to 185 contribute to the beta-D-mannose site; these read QDDCN, QGDCN, and YGWQ. The Carbohydrate-binding motif 1 signature appears at 51 to 59; that stretch reads QDDCNLVLY. Disulfide bonds link Cys-54-Cys-74 and Cys-173-Cys-195. A Carbohydrate-binding motif 2 motif is present at residues 170 to 178; that stretch reads QGDCNLVLY.

In terms of assembly, forms heterodimers.

The protein localises to the secreted. Mannose-specific lectin. Shows agglutinating activity towards erythrocytes from rabbit. The protein is Mannose-specific lectin 1 of Remusatia vivipara (Hitchhiker elephant ear).